The primary structure comprises 151 residues: Small ribosomal subunit protein bS6 (151 aa).

Positions 94 to 151 (EEHEQGPSAMMRKRDDDDRGERGERPRGPRPERGERGERGERGPRRPREDNIGEEGLY) are disordered. Basic and acidic residues predominate over residues 105–144 (RKRDDDDRGERGERPRGPRPERGERGERGERGPRRPREDN).

The protein belongs to the bacterial ribosomal protein bS6 family.

Functionally, binds together with bS18 to 16S ribosomal RNA. The sequence is that of Small ribosomal subunit protein bS6 from Beijerinckia indica subsp. indica (strain ATCC 9039 / DSM 1715 / NCIMB 8712).